The primary structure comprises 397 residues: Putative nickel insertion protein (397 aa).

It belongs to the LarC family.

The chain is Putative nickel insertion protein from Synechococcus sp. (strain JA-2-3B'a(2-13)) (Cyanobacteria bacterium Yellowstone B-Prime).